The following is a 184-amino-acid chain: Holliday junction branch migration complex subunit RuvA (184 aa).

Residues 1–64 form a domain I region; the sequence is MIKAIEGIIT…EDANLLYGFI (64 aa). The domain II stretch occupies residues 65-137; it reads KESEQRIFEM…LSDAKFGEIN (73 aa). Residue Asn137 is a region of interest, flexible linker. A domain III region spans residues 138-184; that stretch reads SMPSYQNEAFMALESLGFKRDRISKVLNECSSNDTASLIKEALKKLA.

The protein belongs to the RuvA family. Homotetramer. Forms an RuvA(8)-RuvB(12)-Holliday junction (HJ) complex. HJ DNA is sandwiched between 2 RuvA tetramers; dsDNA enters through RuvA and exits via RuvB. An RuvB hexamer assembles on each DNA strand where it exits the tetramer. Each RuvB hexamer is contacted by two RuvA subunits (via domain III) on 2 adjacent RuvB subunits; this complex drives branch migration. In the full resolvosome a probable DNA-RuvA(4)-RuvB(12)-RuvC(2) complex forms which resolves the HJ.

Its subcellular location is the cytoplasm. The RuvA-RuvB-RuvC complex processes Holliday junction (HJ) DNA during genetic recombination and DNA repair, while the RuvA-RuvB complex plays an important role in the rescue of blocked DNA replication forks via replication fork reversal (RFR). RuvA specifically binds to HJ cruciform DNA, conferring on it an open structure. The RuvB hexamer acts as an ATP-dependent pump, pulling dsDNA into and through the RuvAB complex. HJ branch migration allows RuvC to scan DNA until it finds its consensus sequence, where it cleaves and resolves the cruciform DNA. The chain is Holliday junction branch migration complex subunit RuvA from Campylobacter fetus subsp. fetus (strain 82-40).